Reading from the N-terminus, the 385-residue chain is Transcription factor TGAL3 (385 aa).

Positions 62 to 113 (LHALVGGGDGGDDAGEQRGADSSAVSKERRGDQKMQRRLAQNREAARKSRMR) are disordered. Residues 87–96 (SKERRGDQKM) are compositionally biased toward basic and acidic residues. Positions 93-137 (DQKMQRRLAQNREAARKSRMRKKAYIQQLESSRSKLMHLEQELQR) constitute a bZIP domain. The segment at 95–115 (KMQRRLAQNREAARKSRMRKK) is basic motif. A leucine-zipper region spans residues 121-135 (LESSRSKLMHLEQEL). The 221-residue stretch at 162–382 (TLAFDLEYAR…RALSSLWLAR (221 aa)) folds into the DOG1 domain.

Belongs to the bZIP family. Interacts with NPR1/NH1, NPR2/NH2 and NPR3/NH3.

The protein localises to the nucleus. Functionally, transcriptional regulator involved in defense response. This chain is Transcription factor TGAL3, found in Oryza sativa subsp. japonica (Rice).